A 247-amino-acid polypeptide reads, in one-letter code: Sortase A (247 aa).

Residues 1–9 (MRNKKKLHG) lie on the Cytoplasmic side of the membrane. A helical transmembrane segment spans residues 10–30 (FFNFVRWLLVVLLIIVGLALV). Topologically, residues 31-247 (FNKPIRNAFI…FSKKYNQINL (217 aa)) are extracellular. Residue histidine 140 is the Proton donor/acceptor of the active site. Cysteine 206 serves as the catalytic Acyl-thioester intermediate.

This sequence belongs to the bacterial sortase family. Class A subfamily.

It is found in the cell membrane. Transpeptidase that anchors surface proteins to the cell wall. Recognizes and modifies its substrate by proteolytic cleavage of a C-terminal sorting signal. Following cleavage, a covalent intermediate is formed via a thioester bond between the sortase and its substrate, which is then transferred and covalently attached to the cell wall. This sortase recognizes a Leu-Pro-x-Thr-Gly (LPXTG) motif, which is cleaved by the sortase between the threonine and glycine residues. Essential for adherence to eukaryotic cells and for binding to fibronectin and fibrinogen. The sequence is that of Sortase A from Streptococcus agalactiae serotype III (strain NEM316).